The primary structure comprises 1416 residues: Nucleoporin NUP170 (1416 aa).

Disordered regions lie at residues 1–26 (MEPM…ANPA) and 50–69 (APLA…LMTP).

Belongs to the non-repetitive/WGA-negative nucleoporin family. Component of the nuclear pore complex (NPC). NPC constitutes the exclusive means of nucleocytoplasmic transport. NPCs allow the passive diffusion of ions and small molecules and the active, nuclear transport receptor-mediated bidirectional transport of macromolecules such as proteins, RNAs, ribonucleoparticles (RNPs), and ribosomal subunits across the nuclear envelope. Due to its 8-fold rotational symmetry, all subunits are present with 8 copies or multiples thereof. Part of a tetrameric NUP192-NUP170-NIC96-NUP53 or NUP188-NUP170-NIC96-NUP53 module.

It is found in the nucleus. Its subcellular location is the nuclear pore complex. The protein resides in the nucleus membrane. Functionally, functions as a component of the nuclear pore complex (NPC). NPC components, collectively referred to as nucleoporins (NUPs), can play the role of both NPC structural components and of docking or interaction partners for transiently associated nuclear transport factors. NUP170 probably plays an important role in NPC assembly and organization. This is Nucleoporin NUP170 (NUP170) from Chaetomium thermophilum (strain DSM 1495 / CBS 144.50 / IMI 039719) (Thermochaetoides thermophila).